The sequence spans 316 residues: Cytochrome c biogenesis protein CcsA (316 aa).

7 helical membrane-spanning segments follow: residues F15 to L35, G44 to G64, L71 to L91, M142 to I162, V220 to N240, W247 to L267, and A281 to L301.

This sequence belongs to the CcmF/CycK/Ccl1/NrfE/CcsA family. May interact with Ccs1.

The protein localises to the plastid. It is found in the chloroplast thylakoid membrane. Its function is as follows. Required during biogenesis of c-type cytochromes (cytochrome c6 and cytochrome f) at the step of heme attachment. The protein is Cytochrome c biogenesis protein CcsA of Trachelium caeruleum (Blue throatwort).